The sequence spans 839 residues: Protein translocase subunit SecA (839 aa).

ATP-binding positions include Gln85, 103–107, and Asp493; that span reads GEGKT. Basic and acidic residues predominate over residues 780-790; that stretch reads QIHEQERERAS. Residues 780 to 839 form a disordered region; sequence QIHEQERERASQRATTAAPQNIQSQQSANTDDLPKVERNEACPCGSGKKFKNCHGRKSFS. Positions 791–809 are enriched in polar residues; that stretch reads QRATTAAPQNIQSQQSANT. Positions 821, 823, 832, and 833 each coordinate Zn(2+). Residues 827 to 839 show a composition bias toward basic residues; sequence KKFKNCHGRKSFS.

Belongs to the SecA family. As to quaternary structure, monomer and homodimer. Part of the essential Sec protein translocation apparatus which comprises SecA, SecYEG and auxiliary proteins SecDF. Other proteins may also be involved. The cofactor is Zn(2+).

The protein localises to the cell membrane. Its subcellular location is the cytoplasm. It catalyses the reaction ATP + H2O + cellular proteinSide 1 = ADP + phosphate + cellular proteinSide 2.. Functionally, part of the Sec protein translocase complex. Interacts with the SecYEG preprotein conducting channel. Has a central role in coupling the hydrolysis of ATP to the transfer of proteins into and across the cell membrane, serving as an ATP-driven molecular motor driving the stepwise translocation of polypeptide chains across the membrane. The protein is Protein translocase subunit SecA of Streptococcus pyogenes serotype M1.